The chain runs to 95 residues: Protein TusB (95 aa).

It belongs to the DsrH/TusB family. In terms of assembly, heterohexamer, formed by a dimer of trimers. The hexameric TusBCD complex contains 2 copies each of TusB, TusC and TusD. The TusBCD complex interacts with TusE.

Its subcellular location is the cytoplasm. Part of a sulfur-relay system required for 2-thiolation of 5-methylaminomethyl-2-thiouridine (mnm(5)s(2)U) at tRNA wobble positions. This chain is Protein TusB, found in Escherichia coli O139:H28 (strain E24377A / ETEC).